A 276-amino-acid chain; its full sequence is Protease HtpX homolog (276 aa).

The helical transmembrane segment at 16-36 threads the bilayer; that stretch reads LFIWFGGMIAGQTGMVIAFLV. Residue histidine 130 participates in Zn(2+) binding. The active site involves glutamate 131. A Zn(2+)-binding site is contributed by histidine 134. 2 helical membrane passes run 142 to 162 and 173 to 193; these read IGTV…FGMF and IFVM…IQMT. Glutamate 199 serves as a coordination point for Zn(2+).

This sequence belongs to the peptidase M48B family. Zn(2+) is required as a cofactor.

Its subcellular location is the cell inner membrane. This is Protease HtpX homolog from Sulfurovum sp. (strain NBC37-1).